We begin with the raw amino-acid sequence, 108 residues long: Small cysteine and glycine repeat-containing protein 8 (108 aa).

A 12 X 2 AA repeats of CG region spans residues 4-84; sequence CGCGGCGGGC…RRTCSSCGCG (81 aa).

It belongs to the KRTAP type 28 family.

In the hair cortex, hair keratin intermediate filaments are embedded in an interfilamentous matrix, consisting of hair keratin-associated proteins (KRTAP), which are essential for the formation of a rigid and resistant hair shaft through their extensive disulfide bond cross-linking with abundant cysteine residues of hair keratins. The matrix proteins include the high-sulfur and high-glycine-tyrosine keratins. The sequence is that of Small cysteine and glycine repeat-containing protein 8 from Homo sapiens (Human).